The following is an 893-amino-acid chain: UPF0182 protein CLK_3152 (893 aa).

Helical transmembrane passes span 9 to 29 (IPLF…NFII), 49 to 69 (AIII…WMYY), 94 to 114 (LFFI…SSSY), 154 to 174 (VIIS…FILE), 202 to 222 (LAIV…IKIW), 246 to 266 (FYKI…LSIV), and 273 to 293 (VSIC…ASFL).

It belongs to the UPF0182 family.

The protein localises to the cell membrane. This Clostridium botulinum (strain Loch Maree / Type A3) protein is UPF0182 protein CLK_3152.